The chain runs to 156 residues: Small ribosomal subunit protein eS10 (156 aa).

The interval 91-156 (LKRQTRPEAA…FGRGRQEQEE (66 aa)) is disordered. Residues 95-119 (TRPEAARPRPKEGAPRAQVGEDRAG) are compositionally biased toward basic and acidic residues.

Belongs to the eukaryotic ribosomal protein eS10 family.

The protein resides in the cytoplasm. The protein is Small ribosomal subunit protein eS10 (RPS10) of Lumbricus rubellus (Humus earthworm).